Here is a 198-residue protein sequence, read N- to C-terminus: Na(+)-translocating NADH-quinone reductase subunit E (198 aa).

Transmembrane regions (helical) follow at residues 11-31 (AVFV…FLAV), 35-55 (VSTA…SVPV), 77-97 (FLNF…LEMI), 110-130 (GIFL…SFMV), 140-160 (VVYG…MAGI), and 176-196 (LGIT…FSGV).

It belongs to the NqrDE/RnfAE family. As to quaternary structure, composed of six subunits; NqrA, NqrB, NqrC, NqrD, NqrE and NqrF.

The protein resides in the cell inner membrane. It catalyses the reaction a ubiquinone + n Na(+)(in) + NADH + H(+) = a ubiquinol + n Na(+)(out) + NAD(+). NQR complex catalyzes the reduction of ubiquinone-1 to ubiquinol by two successive reactions, coupled with the transport of Na(+) ions from the cytoplasm to the periplasm. NqrA to NqrE are probably involved in the second step, the conversion of ubisemiquinone to ubiquinol. The chain is Na(+)-translocating NADH-quinone reductase subunit E from Serratia proteamaculans (strain 568).